A 187-amino-acid chain; its full sequence is Ribosome-recycling factor (187 aa).

Belongs to the RRF family.

It localises to the cytoplasm. Functionally, responsible for the release of ribosomes from messenger RNA at the termination of protein biosynthesis. May increase the efficiency of translation by recycling ribosomes from one round of translation to another. The chain is Ribosome-recycling factor from Rhodopseudomonas palustris (strain BisB18).